Reading from the N-terminus, the 384-residue chain is Probable 2-heptyl-3-hydroxy-4(1H)-quinolone synthase AqdB2 (384 aa).

This sequence belongs to the 3-hydroxybenzoate 6-hydroxylase family.

It catalyses the reaction 2-heptyl-4(1H)-quinolone + NADH + O2 + H(+) = 2-heptyl-3-hydroxy-4(1H)-quinolone + NAD(+) + H2O. Its function is as follows. Involved in the degradation of the Pseudomonas aeruginosa quorum sensing signal molecule HHQ (2-heptyl-4-quinolone) to anthranilic acid. Probably catalyzes the hydroxylation of HHQ to PQS (2-heptyl-3-hydroxy-4-quinolone). This chain is Probable 2-heptyl-3-hydroxy-4(1H)-quinolone synthase AqdB2, found in Rhodococcus erythropolis (Arthrobacter picolinophilus).